A 287-amino-acid chain; its full sequence is MEGIIIKGIGGFYYIKTDEGIIECKARGKFRYNSLKPMVGDRVTIKVENGKGVIEDIHERSSELIRPTVANVTQAFVVFAIKNPDINLDLLNRFLTLCEYNDIHAVVCLNKEDLCTEEEKENLKELINDIGYEVLFINAKEGKGFDALKERLEHNITVLCGPSGAGKSTLLNAFIDREHMETGSVSEKIGRGKHTTRHSELIDVDNGYLVDTPGFTTLDVTFIDRDSLKYCFPEFNDYNNLCKFNGCNHYKEPKCAVKEAVEEGKINKLRYEFYIKTLEEIINRRGN.

In terms of domain architecture, CP-type G spans 61–218 (SSELIRPTVA…LVDTPGFTTL (158 aa)). GTP contacts are provided by residues 110–113 (NKED) and 161–169 (GPSGAGKST). Cys242, Cys247, His249, and Cys255 together coordinate Zn(2+).

Belongs to the TRAFAC class YlqF/YawG GTPase family. RsgA subfamily. In terms of assembly, monomer. Associates with 30S ribosomal subunit, binds 16S rRNA. Requires Zn(2+) as cofactor.

The protein localises to the cytoplasm. One of several proteins that assist in the late maturation steps of the functional core of the 30S ribosomal subunit. Helps release RbfA from mature subunits. May play a role in the assembly of ribosomal proteins into the subunit. Circularly permuted GTPase that catalyzes slow GTP hydrolysis, GTPase activity is stimulated by the 30S ribosomal subunit. The polypeptide is Small ribosomal subunit biogenesis GTPase RsgA (Clostridium perfringens (strain SM101 / Type A)).